The sequence spans 262 residues: Probable ketoamine kinase TTHA1179 (262 aa).

79 to 81 contributes to the ATP binding site; sequence AYL. The active-site Proton acceptor is aspartate 172.

This sequence belongs to the fructosamine kinase family.

It carries out the reaction N(6)-(D-ribulosyl)-L-lysine + ATP = N(6)-(3-O-phospho-D-ribulosyl)-L-lysine + ADP + H(+). The enzyme catalyses N(6)-(D-erythrulosyl)-L-lysine + ATP = N(6)-(3-O-phospho-D-erythrulosyl)-L-lysine + ADP + H(+). It catalyses the reaction N(6)-D-ribulosyl-L-lysyl-[protein] + ATP = N(6)-(3-O-phospho-D-ribulosyl)-L-lysyl-[protein] + ADP + H(+). The catalysed reaction is N(6)-(D-erythrulosyl)-L-lysyl-[protein] + ATP = N(6)-(3-O-phospho-D-erythrulosyl)-L-lysyl-[protein] + ADP + H(+). Functionally, ketoamine kinase that phosphorylates ketoamines, such as erythruloselysine and ribuloselysine, on the third carbon of the sugar moiety to generate ketoamine 3-phosphate. Has higher activity on free lysine (erythruloselysine and ribuloselysine), than on ribuloselysine and erythruloselysine residues on glycated proteins. The polypeptide is Probable ketoamine kinase TTHA1179 (Thermus thermophilus (strain ATCC 27634 / DSM 579 / HB8)).